A 427-amino-acid polypeptide reads, in one-letter code: MASIIIGSQWGDEGKGKLVDILSQQFDVVARCQGGANAGHTIVVDGKKIALHLIPSGILNEKASCILGNGMVIHLPTFFKEVQGLQDKGINYKGRLFVSDRAHLVFDLHQMIDAMKEAELSNGTSNDSIGTTKRGIGPCYSSKASRGGLRVCDLYSPEHFRKTFTRLVENKHKRFGSFEYDVEAELKRYQEFAEMLKPFVIDSVYYLNQAFKDGKKVLIEGAQSTMLDLDFGCYPYVTSSASSVGGACTGLGISPNKVVTQIGVVKAYTTKVGSGPFPTEQNDHVGDSLRKAGSEFGTTTGRPRRIGWLDAVVLRYTSMINDFTRLNLTKLDVLSDFEEIKIGVDYKYKGETIKSFPASLETLAQCEVVYESFPGWKCDLSHVTEYDQLPIQAKNYIKRIEELVGVPIVYIGVGVERKNLIERKELI.

GTP contacts are provided by residues 11-17 and 39-41; these read GDEGKGK and GHT. The active-site Proton acceptor is the aspartate 12. Aspartate 12 and glycine 39 together coordinate Mg(2+). Residues 12-15, 37-40, threonine 132, arginine 146, glutamine 223, threonine 238, and arginine 302 contribute to the IMP site; these read DEGK and NAGH. The active-site Proton donor is the histidine 40. Substrate is bound at residue 298-304; the sequence is TTTGRPR. Residues arginine 304, 330-332, and 412-414 each bind GTP; these read KLD and GVG.

It belongs to the adenylosuccinate synthetase family. As to quaternary structure, homodimer. The cofactor is Mg(2+).

It localises to the cytoplasm. The enzyme catalyses IMP + L-aspartate + GTP = N(6)-(1,2-dicarboxyethyl)-AMP + GDP + phosphate + 2 H(+). It participates in purine metabolism; AMP biosynthesis via de novo pathway; AMP from IMP: step 1/2. Plays an important role in the de novo pathway and in the salvage pathway of purine nucleotide biosynthesis. Catalyzes the first committed step in the biosynthesis of AMP from IMP. This chain is Adenylosuccinate synthetase (purA), found in Dictyostelium discoideum (Social amoeba).